Here is a 459-residue protein sequence, read N- to C-terminus: Glutamate--isopropylamine ligase (459 aa).

The 97-residue stretch at 19 to 115 (HNIDTIRLGA…VLCDIQHLNG (97 aa)) folds into the GS beta-grasp domain. The region spanning 122–459 (PRNLLRKAIE…WELARYLDII (338 aa)) is the GS catalytic domain.

This sequence belongs to the glutamine synthetase family.

The catalysed reaction is isopropylamine + L-glutamate + ATP = gamma-L-glutamyl-isopropylamide + ADP + phosphate + H(+). Functionally, involved in the degradation of isopropylamine, which is a constituent of the herbicides atrazine. Catalyzes the ATP-dependent formation of gamma-glutamyl-isopropylamide from isopropylamine and L-glutamate. It can also use aminoalkanes, amino-alcohols (L-alaninol and D-alaninol) and amino-esters as substrates. This is Glutamate--isopropylamine ligase (ipuC) from Pseudomonas sp.